Reading from the N-terminus, the 157-residue chain is Endoribonuclease YbeY (157 aa).

Histidine 121, histidine 125, and aspartate 131 together coordinate Zn(2+).

This sequence belongs to the endoribonuclease YbeY family. Requires Zn(2+) as cofactor.

It localises to the cytoplasm. Functionally, single strand-specific metallo-endoribonuclease involved in late-stage 70S ribosome quality control and in maturation of the 3' terminus of the 16S rRNA. The protein is Endoribonuclease YbeY of Salinibacter ruber (strain DSM 13855 / M31).